The sequence spans 345 residues: Phosphoribosylformylglycinamidine cyclo-ligase (345 aa).

The protein belongs to the AIR synthase family.

It localises to the cytoplasm. The enzyme catalyses 2-formamido-N(1)-(5-O-phospho-beta-D-ribosyl)acetamidine + ATP = 5-amino-1-(5-phospho-beta-D-ribosyl)imidazole + ADP + phosphate + H(+). It participates in purine metabolism; IMP biosynthesis via de novo pathway; 5-amino-1-(5-phospho-D-ribosyl)imidazole from N(2)-formyl-N(1)-(5-phospho-D-ribosyl)glycinamide: step 2/2. This Escherichia coli O139:H28 (strain E24377A / ETEC) protein is Phosphoribosylformylglycinamidine cyclo-ligase.